The primary structure comprises 1100 residues: DNA-directed RNA polymerase subunit beta (1100 aa).

A disordered region spans residues 1064-1100 (YEEDKEVDLMADVNQRRTPSRPTYESMSVGDIDDDDD). Residues 1079–1089 (RRTPSRPTYES) show a composition bias toward polar residues.

This sequence belongs to the RNA polymerase beta chain family. In terms of assembly, in cyanobacteria the RNAP catalytic core is composed of 2 alpha, 1 beta, 1 beta', 1 gamma and 1 omega subunit. When a sigma factor is associated with the core the holoenzyme is formed, which can initiate transcription.

It carries out the reaction RNA(n) + a ribonucleoside 5'-triphosphate = RNA(n+1) + diphosphate. Functionally, DNA-dependent RNA polymerase catalyzes the transcription of DNA into RNA using the four ribonucleoside triphosphates as substrates. The chain is DNA-directed RNA polymerase subunit beta from Synechococcus sp. (strain ATCC 27144 / PCC 6301 / SAUG 1402/1) (Anacystis nidulans).